Reading from the N-terminus, the 355-residue chain is Syntaxin-5 (355 aa).

Residues 1-333 (MIPRKRYGSK…KYFQSVTSNR (333 aa)) are Cytoplasmic-facing. The span at 28 to 37 (PATAGSSSSD) shows a compositional bias: polar residues. The disordered stretch occupies residues 28–51 (PATAGSSSSDIAPLPPPVTLVPPP). The segment covering 40-51 (PLPPPVTLVPPP) has biased composition (pro residues). An IxM motif; signal for cargo packaging into COPII-coated vesicles motif is present at residues 245–247 (IDM). A t-SNARE coiled-coil homology domain is found at 263-325 (DSYIQSRADT…EAAHSEILKY (63 aa)). A coiled-coil region spans residues 287–318 (FQQLAHMVKEQEETIQRIDENVLGAQLDVEAA). Residues 334–354 (WLMVKIFLILIVFFIIFVVFL) traverse the membrane as a helical; Anchor for type IV membrane protein segment. Position 355 (Ala-355) is a topological domain, vesicular.

The protein belongs to the syntaxin family. As to quaternary structure, part of a ternary complex containing STX5A, NSFL1C and VCP. Identified in a unique SNARE complex composed of the Golgi SNAREs GOSR1, GOSR2, YKT6 and VTI1A. Component of a SNARE complex consisting of STX5, YKT6, GOSR1 and BET1L. Interacts with BET1L. Interacts with BET1. Interacts with COG4. Interacts with GM130/GOLGA2. Interacts (via IxM motif) with SEC24C and SEC24D; mediates STX5 packaging into COPII-coated vesicles. Interacts with VLDLR; this interaction mediates VLDLR translocation from the endoplasmic reticulum to the plasma membrane.

Its subcellular location is the endoplasmic reticulum-Golgi intermediate compartment membrane. The protein resides in the golgi apparatus membrane. Mediates endoplasmic reticulum to Golgi transport. Together with p115/USO1 and GM130/GOLGA2, involved in vesicle tethering and fusion at the cis-Golgi membrane to maintain the stacked and inter-connected structure of the Golgi apparatus. Its function is as follows. Required for Golgi to endoplasmic reticulum retrogade transport, and for intra-Golgi transport. Functionally, (Microbial infection) Required for the efficient production of infectious virion during human cytomegalovirus infection. Mechanistically, participates in the formation of the cytoplasmic viral assembly compartment where tegument acquisition and envelopment occur. The chain is Syntaxin-5 (STX5) from Homo sapiens (Human).